A 537-amino-acid chain; its full sequence is NEDD4-binding protein 3 (537 aa).

At Ser172 the chain carries Phosphoserine. Disordered stretches follow at residues 173–234 (LDEG…VLSC), 328–361 (KELR…EARW), and 423–458 (QEQA…REGA). Low complexity predominate over residues 178–207 (PEPSLSDSSSGGSFGRSPGTGPSPFSSSLG). Positions 295 to 501 (VERLHEVAQK…RVLRYQREIQ (207 aa)) form a coiled coil. The span at 351–361 (PNARPEEEARW) shows a compositional bias: basic and acidic residues.

It belongs to the N4BP3 family. As to quaternary structure, binds NEDD4. Interacts with 14-3-3 proteins. Interacts with MAVS.

The protein localises to the cytoplasmic vesicle. Its subcellular location is the cell projection. It is found in the axon. It localises to the dendrite. Its function is as follows. Plays a positive role in the antiviral innate immune signaling pathway. Mechanistically, interacts with MAVS and functions as a positive regulator to promote 'Lys-63'-linked polyubiquitination of MAVS and thus strengthens the interaction between MAVS and TRAF2. Also plays a role in axon and dendrite arborization during cranial nerve development. May also be important for neural crest migration and early development of other anterior structures including eye, brain and cranial cartilage. The protein is NEDD4-binding protein 3 (N4bp3) of Mus musculus (Mouse).